The sequence spans 400 residues: Bifunctional arginine demethylase and lysyl-hydroxylase psr-1 (400 aa).

One can recognise a JmjC domain in the interval 146–310; that stretch reads RKTKKLSEDY…LVWPKTVKGR (165 aa). Residue Thr-189 coordinates substrate. The Fe cation site is built by His-192 and Asp-194. Asn-202 provides a ligand contact to 2-oxoglutarate. Substrate is bound at residue Lys-209. Residue His-278 coordinates Fe cation. Thr-290 contacts 2-oxoglutarate. The disordered stretch occupies residues 342-400; the sequence is DMNESSSDSSSSSSSSDDSSDESDCDDSGRCGGRKRKNDDRSNECPEKMSTTYFQNSLV. The segment covering 346 to 358 has biased composition (low complexity); it reads SSSDSSSSSSSSD. A compositionally biased stretch (basic and acidic residues) spans 378–388; the sequence is KNDDRSNECPE. A compositionally biased stretch (polar residues) spans 390 to 400; the sequence is MSTTYFQNSLV.

This sequence belongs to the JMJD6 family. In terms of assembly, interacts with ced-5 and ced-12. It depends on Fe(2+) as a cofactor.

The protein localises to the nucleus. In terms of biological role, dioxygenase that can both act as a histone arginine demethylase and a lysyl-hydroxylase. The polypeptide is Bifunctional arginine demethylase and lysyl-hydroxylase psr-1 (psr-1) (Caenorhabditis elegans).